The following is a 511-amino-acid chain: Probable Xaa-Pro aminopeptidase MAA_08947 (511 aa).

The Mn(2+) site is built by D275, D286, E439, and E480.

Belongs to the peptidase M24B family. The cofactor is Mn(2+).

The catalysed reaction is Release of any N-terminal amino acid, including proline, that is linked to proline, even from a dipeptide or tripeptide.. Its function is as follows. Catalyzes the removal of a penultimate prolyl residue from the N-termini of peptides. The protein is Probable Xaa-Pro aminopeptidase MAA_08947 of Metarhizium robertsii (strain ARSEF 23 / ATCC MYA-3075) (Metarhizium anisopliae (strain ARSEF 23)).